Consider the following 393-residue polypeptide: MAPSGPTGAQPSPAEPLSRSIFRKFLLMLCSLLTSLYVFYCLAERCPPGSGPVAGVPGRGVPAGPRELAMWPAGAPRKRLLQLRQRRRRGRSGPGDSSDQEEQSPGLAAAPGGSGAGSSVAEAQPGTLALLLDEGSKQLPQAIIIGVKKGGTRALLEFLRVHPDVRAVGAEPHFFDRSYHKGLAWYRDLMPRTLEGQITMEKTPSYFVTREAPARISAMSKDTKLIVVVRDPVTRAISDYTQTLSKRPDIPSFESLTFRNRSAGLIDTSWSAIQIGLYAKHLEPWLRHFPLGQMLFVSGERLVSDPAGELRRVQDFLGLKRIITDKHFYFNQTKGFPCLKKAEGSGKPHCLGKTKGRAHPTIAREVLRQLRDFYRPFNRKFYQMTGRDFGWDG.

Topologically, residues 1 to 24 are cytoplasmic; sequence MAPSGPTGAQPSPAEPLSRSIFRK. Residues 25-43 traverse the membrane as a helical; Signal-anchor for type II membrane protein segment; that stretch reads FLLMLCSLLTSLYVFYCLA. Over 44-393 the chain is Lumenal; it reads ERCPPGSGPV…MTGRDFGWDG (350 aa). The disordered stretch occupies residues 85 to 121; sequence QRRRRGRSGPGDSSDQEEQSPGLAAAPGGSGAGSSVA. 149-153 contacts 3'-phosphoadenylyl sulfate; sequence KGGTR. Residues 171–177 and 202–205 contribute to the substrate site; these read EPHFFDR and KTPS. 3'-phosphoadenylyl sulfate contacts are provided by R230 and S238. N260 carries N-linked (GlcNAc...) asparagine glycosylation. Substrate is bound at residue 270–271; the sequence is WS. The N-linked (GlcNAc...) asparagine glycan is linked to N331. An intrachain disulfide couples C338 to C350. 3'-phosphoadenylyl sulfate is bound at residue 355-359; sequence KGRAH.

Belongs to the sulfotransferase 1 family.

It localises to the golgi apparatus membrane. The enzyme catalyses alpha-D-glucosaminyl-[heparan sulfate](n) + 3'-phosphoadenylyl sulfate = 3-sulfo-alpha-D-glucosaminyl-[heparan sulfate](n) + adenosine 3',5'-bisphosphate + H(+). Functionally, sulfotransferase that utilizes 3'-phospho-5'-adenylyl sulfate (PAPS) to catalyze the transfer of a sulfo group to an N-unsubstituted glucosamine linked to a 2-O-sulfo iduronic acid unit on heparan sulfate. Catalyzes the O-sulfation of glucosamine in IdoUA2S-GlcNS and also in IdoUA2S-GlcNH2. Unlike HS3ST1/3-OST-1, does not convert non-anticoagulant heparan sulfate to anticoagulant heparan sulfate. In Mus musculus (Mouse), this protein is Heparan sulfate glucosamine 3-O-sulfotransferase 3A1 (Hs3st3a1).